The following is a 538-amino-acid chain: Bifunctional purine biosynthesis protein PurH (538 aa).

In terms of domain architecture, MGS-like spans 11–158; the sequence is PDLHRVRRAL…KNHAYTGVVT (148 aa).

Belongs to the PurH family.

It catalyses the reaction (6R)-10-formyltetrahydrofolate + 5-amino-1-(5-phospho-beta-D-ribosyl)imidazole-4-carboxamide = 5-formamido-1-(5-phospho-D-ribosyl)imidazole-4-carboxamide + (6S)-5,6,7,8-tetrahydrofolate. The catalysed reaction is IMP + H2O = 5-formamido-1-(5-phospho-D-ribosyl)imidazole-4-carboxamide. The protein operates within purine metabolism; IMP biosynthesis via de novo pathway; 5-formamido-1-(5-phospho-D-ribosyl)imidazole-4-carboxamide from 5-amino-1-(5-phospho-D-ribosyl)imidazole-4-carboxamide (10-formyl THF route): step 1/1. Its pathway is purine metabolism; IMP biosynthesis via de novo pathway; IMP from 5-formamido-1-(5-phospho-D-ribosyl)imidazole-4-carboxamide: step 1/1. The chain is Bifunctional purine biosynthesis protein PurH from Bartonella bacilliformis (strain ATCC 35685 / KC583 / Herrer 020/F12,63).